Reading from the N-terminus, the 1852-residue chain is Chitin synthase csmA (1852 aa).

The segment at 1–20 (MVGTLPAGHTPSHVQSSLPS) is disordered. One can recognise a Myosin motor domain in the interval 1–787 (MVGTLPAGHT…CWADLAKVGE (787 aa)). The N-linked (GlcNAc...) asparagine glycan is linked to Asn58. Residue 102 to 109 (GESGAGKT) participates in ATP binding. The segment at 599–646 (SSKPLRMPSMARRKTSPASRLTFDATPAEDPYETESQTGSSAKNSSAK) is disordered. N-linked (GlcNAc...) asparagine glycosylation occurs at Asn642. An actin-binding region spans residues 667–691 (LDIVNKCLTSGNLNPYFVFCLKPND). N-linked (GlcNAc...) asparagine glycosylation is present at Asn840. 2 helical membrane-spanning segments follow: residues 895–915 (WMAI…RYIG) and 930–950 (FAIN…IVGF). One can recognise a Cytochrome b5 heme-binding domain in the interval 958 to 1017 (QHVYSPAELSSHDGKDGHSSYTSIRGLVLDLGEFMDSHYPGIVPDSALKKYAGVDSTALF). 2 N-linked (GlcNAc...) asparagine glycosylation sites follow: Asn1044 and Asn1195. The helical transmembrane segment at 1205–1225 (FILAISVLICSVIVFKFFAAL) threads the bilayer. N-linked (GlcNAc...) asparagine glycosylation is found at Asn1428, Asn1462, and Asn1568. The next 3 helical transmembrane spans lie at 1600 to 1620 (ISTI…VWLV), 1626 to 1646 (IPWT…IIFI), and 1653 to 1673 (MIGW…ALPL). In terms of domain architecture, DEK-C spans 1794-1849 (LPSDDAILSEIRDILRTADLMTVTKKNIKQELERRFGVNLDAKRPYINSATEAVLS).

It in the N-terminal section; belongs to the TRAFAC class myosin-kinesin ATPase superfamily. Myosin family. In the C-terminal section; belongs to the chitin synthase family. Class V subfamily. In terms of assembly, binds F-actin via its N-terminal myosin motor-like domain (MMD). Interacts with kibesin kinA.

It is found in the cell membrane. The protein resides in the cell septum. It localises to the cell tip. The catalysed reaction is [(1-&gt;4)-N-acetyl-beta-D-glucosaminyl](n) + UDP-N-acetyl-alpha-D-glucosamine = [(1-&gt;4)-N-acetyl-beta-D-glucosaminyl](n+1) + UDP + H(+). Polymerizes chitin, a structural polymer of the cell wall and septum, by transferring the sugar moiety of UDP-GlcNAc to the non-reducing end of the growing chitin polymer. Plays an important role in polarized hyphal cell wall synthesis and maintenance of cell wall integrity. Its role in growth and morphogenesis is particularly important under low osmotic conditions. In Emericella nidulans (Aspergillus nidulans), this protein is Chitin synthase csmA.